We begin with the raw amino-acid sequence, 122 residues long: Fluoride-specific ion channel FluC 2 (122 aa).

4 helical membrane passes run V4–V24, L38–A58, A63–L83, and A96–Q116. 2 residues coordinate Na(+): G73 and T76.

The protein belongs to the fluoride channel Fluc/FEX (TC 1.A.43) family.

It is found in the cell membrane. The catalysed reaction is fluoride(in) = fluoride(out). With respect to regulation, na(+) is not transported, but it plays an essential structural role and its presence is essential for fluoride channel function. Functionally, fluoride-specific ion channel. Important for reducing fluoride concentration in the cell, thus reducing its toxicity. The sequence is that of Fluoride-specific ion channel FluC 2 from Mycolicibacterium paratuberculosis (strain ATCC BAA-968 / K-10) (Mycobacterium paratuberculosis).